Consider the following 117-residue polypeptide: Large ribosomal subunit protein bL20 (117 aa).

It belongs to the bacterial ribosomal protein bL20 family.

Its function is as follows. Binds directly to 23S ribosomal RNA and is necessary for the in vitro assembly process of the 50S ribosomal subunit. It is not involved in the protein synthesizing functions of that subunit. The chain is Large ribosomal subunit protein bL20 from Geobacter metallireducens (strain ATCC 53774 / DSM 7210 / GS-15).